We begin with the raw amino-acid sequence, 306 residues long: Ribonuclease Z (306 aa).

The Zn(2+) site is built by H63, H65, D67, H68, H141, D211, and H269. D67 acts as the Proton acceptor in catalysis.

The protein belongs to the RNase Z family. Homodimer. Zn(2+) serves as cofactor.

The catalysed reaction is Endonucleolytic cleavage of RNA, removing extra 3' nucleotides from tRNA precursor, generating 3' termini of tRNAs. A 3'-hydroxy group is left at the tRNA terminus and a 5'-phosphoryl group is left at the trailer molecule.. In terms of biological role, zinc phosphodiesterase, which displays some tRNA 3'-processing endonuclease activity. Probably involved in tRNA maturation, by removing a 3'-trailer from precursor tRNA. In Staphylococcus aureus (strain MSSA476), this protein is Ribonuclease Z.